The sequence spans 64 residues: Small ribosomal subunit protein bS18c (64 aa).

The protein belongs to the bacterial ribosomal protein bS18 family. In terms of assembly, part of the 30S ribosomal subunit.

Its subcellular location is the plastid. The protein localises to the chloroplast. The chain is Small ribosomal subunit protein bS18c (rps18) from Bigelowiella natans (Pedinomonas minutissima).